Reading from the N-terminus, the 137-residue chain is Large ribosomal subunit protein uL16 (137 aa).

The protein belongs to the universal ribosomal protein uL16 family. As to quaternary structure, part of the 50S ribosomal subunit.

Functionally, binds 23S rRNA and is also seen to make contacts with the A and possibly P site tRNAs. The protein is Large ribosomal subunit protein uL16 of Bartonella henselae (strain ATCC 49882 / DSM 28221 / CCUG 30454 / Houston 1) (Rochalimaea henselae).